The following is a 189-amino-acid chain: Ribosome maturation factor RimM (189 aa).

A compositionally biased stretch (polar residues) spans 1–16 (MAPSCPTRSRVWSSRT). A disordered region spans residues 1 to 21 (MAPSCPTRSRVWSSRTSPPPD). The PRC barrel domain maps to 118 to 189 (ENEFYWSDLI…TVEVDWGEDY (72 aa)).

The protein belongs to the RimM family. In terms of assembly, binds ribosomal protein uS19.

It is found in the cytoplasm. Functionally, an accessory protein needed during the final step in the assembly of 30S ribosomal subunit, possibly for assembly of the head region. Essential for efficient processing of 16S rRNA. May be needed both before and after RbfA during the maturation of 16S rRNA. It has affinity for free ribosomal 30S subunits but not for 70S ribosomes. The chain is Ribosome maturation factor RimM from Thiobacillus denitrificans (strain ATCC 25259 / T1).